We begin with the raw amino-acid sequence, 470 residues long: N amino acid transport system protein (470 aa).

The span at Met1–Asp11 shows a compositional bias: basic and acidic residues. Residues Met1 to Ser21 are disordered. The Extracellular portion of the chain corresponds to Met1–Lys56. A run of 2 helical transmembrane segments spans residues Arg57–Ala77 and Phe78–Ile98. Residues Tyr99 to Glu131 lie on the Extracellular side of the membrane. A helical transmembrane segment spans residues Ile132–Gly152. Topologically, residues Thr153–Ser168 are cytoplasmic. Transmembrane regions (helical) follow at residues Leu169–Ala189 and Val191–Ile211. Residues Ala212–Asp236 lie on the Cytoplasmic side of the membrane. Residues Leu237–Met257 traverse the membrane as a helical segment. Topologically, residues Cys258–Ser275 are extracellular. Residues Ile276–Ala296 traverse the membrane as a helical segment. At Phe297–Lys316 the chain is on the cytoplasmic side. The chain crosses the membrane as a helical span at residues Val317–Val337. At Ser338 to Pro357 the chain is on the extracellular side. The chain crosses the membrane as a helical span at residues Ala358 to Ala378. Topologically, residues Glu379 to Asp386 are cytoplasmic. A helical transmembrane segment spans residues Leu387–Met407. The Extracellular portion of the chain corresponds to Tyr408 to Ala427. Residues Leu428–Ile448 form a helical membrane-spanning segment. Topologically, residues Gln449 to Ala470 are cytoplasmic.

Belongs to the amino acid/polyamine transporter 2 family.

The protein localises to the membrane. In terms of biological role, required for the transport of neutral aliphatic and aromatic amino acids via the N system. This Neurospora crassa (strain ATCC 24698 / 74-OR23-1A / CBS 708.71 / DSM 1257 / FGSC 987) protein is N amino acid transport system protein (mtr).